Consider the following 334-residue polypeptide: Tryptophan--tRNA ligase (334 aa).

ATP contacts are provided by residues Q11–S13 and G19–N20. The short motif at P12–N20 is the 'HIGH' region element. Position 135 (D135) interacts with L-tryptophan. Residues G147–D149, V186, and K195–S199 each bind ATP. A 'KMSKS' region motif is present at residues K195 to S199.

The protein belongs to the class-I aminoacyl-tRNA synthetase family. As to quaternary structure, homodimer.

The protein localises to the cytoplasm. The enzyme catalyses tRNA(Trp) + L-tryptophan + ATP = L-tryptophyl-tRNA(Trp) + AMP + diphosphate + H(+). Its function is as follows. Catalyzes the attachment of tryptophan to tRNA(Trp). Amino acylates tRNA(Trp) with both L- and D-tryptophan, although D-tryptophan is a poor substrate. The polypeptide is Tryptophan--tRNA ligase (Escherichia coli (strain K12)).